The chain runs to 384 residues: 8-amino-7-oxononanoate synthase (384 aa).

Arg-21 contributes to the substrate binding site. 108–109 (GF) serves as a coordination point for pyridoxal 5'-phosphate. Residue His-133 participates in substrate binding. Ser-179, His-207, and Thr-233 together coordinate pyridoxal 5'-phosphate. The residue at position 236 (Lys-236) is an N6-(pyridoxal phosphate)lysine. Thr-352 serves as a coordination point for substrate.

This sequence belongs to the class-II pyridoxal-phosphate-dependent aminotransferase family. BioF subfamily. As to quaternary structure, homodimer. It depends on pyridoxal 5'-phosphate as a cofactor.

The enzyme catalyses 6-carboxyhexanoyl-[ACP] + L-alanine + H(+) = (8S)-8-amino-7-oxononanoate + holo-[ACP] + CO2. Its pathway is cofactor biosynthesis; biotin biosynthesis. In terms of biological role, catalyzes the decarboxylative condensation of pimeloyl-[acyl-carrier protein] and L-alanine to produce 8-amino-7-oxononanoate (AON), [acyl-carrier protein], and carbon dioxide. This Escherichia coli (strain UTI89 / UPEC) protein is 8-amino-7-oxononanoate synthase.